Here is a 144-residue protein sequence, read N- to C-terminus: Large ribosomal subunit protein uL15 (144 aa).

The disordered stretch occupies residues 1–59; the sequence is MRLNTISPAEGSKPTGKRSGRGIGSGLGKTGGVGHKGQKSRSGGRVKPGFEGGQMPIQR. Positions 21–35 are enriched in gly residues; sequence RGIGSGLGKTGGVGH.

This sequence belongs to the universal ribosomal protein uL15 family. As to quaternary structure, part of the 50S ribosomal subunit.

In terms of biological role, binds to the 23S rRNA. The chain is Large ribosomal subunit protein uL15 from Alteromonas mediterranea (strain DSM 17117 / CIP 110805 / LMG 28347 / Deep ecotype).